Consider the following 231-residue polypeptide: MRLAVIGAMEEEVTILRNKLENAKTETIAHCEFTTGEYEGTEVILLKSGIGKVNAAISTTLLLDRYKPDYVINTGSAGGFHHTLNVGDVVISTDVRHHDVDVTAFDYEYGQVPGLPAAYAADEKLISITEEAVSELDGIQVAKGTIATGDSFMNDPKRVEEVRARFSDLYAVEMEAAAVAQVCHQFKTPFVVIRALSDIAGKESHVSFDQFLEQAAVHSTELVLKVIKRIH.

Glu12 functions as the Proton acceptor in the catalytic mechanism. Substrate is bound by residues Gly78, Met153, and 174–175 (ME). The Proton donor role is filled by Asp198.

It belongs to the PNP/UDP phosphorylase family. MtnN subfamily.

The enzyme catalyses S-adenosyl-L-homocysteine + H2O = S-(5-deoxy-D-ribos-5-yl)-L-homocysteine + adenine. The catalysed reaction is S-methyl-5'-thioadenosine + H2O = 5-(methylsulfanyl)-D-ribose + adenine. It carries out the reaction 5'-deoxyadenosine + H2O = 5-deoxy-D-ribose + adenine. It participates in amino-acid biosynthesis; L-methionine biosynthesis via salvage pathway; S-methyl-5-thio-alpha-D-ribose 1-phosphate from S-methyl-5'-thioadenosine (hydrolase route): step 1/2. Its function is as follows. Catalyzes the irreversible cleavage of the glycosidic bond in both 5'-methylthioadenosine (MTA) and S-adenosylhomocysteine (SAH/AdoHcy) to adenine and the corresponding thioribose, 5'-methylthioribose and S-ribosylhomocysteine, respectively. Also cleaves 5'-deoxyadenosine, a toxic by-product of radical S-adenosylmethionine (SAM) enzymes, into 5-deoxyribose and adenine. The polypeptide is 5'-methylthioadenosine/S-adenosylhomocysteine nucleosidase (Bacillus subtilis (strain 168)).